Consider the following 243-residue polypeptide: Probable 2-phosphosulfolactate phosphatase (243 aa).

The protein belongs to the ComB family. Mg(2+) is required as a cofactor.

It carries out the reaction (2R)-O-phospho-3-sulfolactate + H2O = (2R)-3-sulfolactate + phosphate. The chain is Probable 2-phosphosulfolactate phosphatase from Prochlorococcus marinus (strain MIT 9313).